Here is a 116-residue protein sequence, read N- to C-terminus: Large ribosomal subunit protein bL19 (116 aa).

It belongs to the bacterial ribosomal protein bL19 family.

Its function is as follows. This protein is located at the 30S-50S ribosomal subunit interface and may play a role in the structure and function of the aminoacyl-tRNA binding site. The chain is Large ribosomal subunit protein bL19 from Streptomyces griseus subsp. griseus (strain JCM 4626 / CBS 651.72 / NBRC 13350 / KCC S-0626 / ISP 5235).